The sequence spans 283 residues: Thymidylate synthase (283 aa).

Arg-21 contributes to the dUMP binding site. His-51 is a binding site for (6R)-5,10-methylene-5,6,7,8-tetrahydrofolate. Position 123–124 (123–124 (RR)) interacts with dUMP. The Nucleophile role is filled by Cys-156. Residues 185-188 (RSAD), Asn-196, and 226-228 (HIY) contribute to the dUMP site. Asp-188 is a binding site for (6R)-5,10-methylene-5,6,7,8-tetrahydrofolate. Ala-282 lines the (6R)-5,10-methylene-5,6,7,8-tetrahydrofolate pocket.

It belongs to the thymidylate synthase family. Bacterial-type ThyA subfamily. As to quaternary structure, homodimer.

It is found in the cytoplasm. It carries out the reaction dUMP + (6R)-5,10-methylene-5,6,7,8-tetrahydrofolate = 7,8-dihydrofolate + dTMP. It functions in the pathway pyrimidine metabolism; dTTP biosynthesis. Its function is as follows. Catalyzes the reductive methylation of 2'-deoxyuridine-5'-monophosphate (dUMP) to 2'-deoxythymidine-5'-monophosphate (dTMP) while utilizing 5,10-methylenetetrahydrofolate (mTHF) as the methyl donor and reductant in the reaction, yielding dihydrofolate (DHF) as a by-product. This enzymatic reaction provides an intracellular de novo source of dTMP, an essential precursor for DNA biosynthesis. The sequence is that of Thymidylate synthase from Flavobacterium johnsoniae (strain ATCC 17061 / DSM 2064 / JCM 8514 / BCRC 14874 / CCUG 350202 / NBRC 14942 / NCIMB 11054 / UW101) (Cytophaga johnsonae).